We begin with the raw amino-acid sequence, 675 residues long: MDVKSKHGHIKSNPEESLLFRNSVSKNIAQLSSINYADRNVQAALEQLSERKFKNEREARKQLPFEVFSDLIWTNGSIIKELSELSSQTLSVQSQLLKVKNSIDSYKNEWSKKTNDAQILLNSYETFCEEEALIEEKLKNIEIFEKNFVIMDDDLIHLTSSTDVDDRFYLILDKAQEIHDSSDSLFASLSGFVEYSSFEEIVKKMSRYIEAAFEKLFRCVQTELSDPQTAQTLEANSHLKKAFTKLFSEPTMVNKSINLIVQARQQILSTAYLTALTRGDFLSSSRPIELSAPDTVRFIGDLLAWIHQTIVNEKELVEALFAARKRQIQLNPFPPWDVPNVLEDQMNSLLDGSLYGICRPLSSRAQTSVLDLSDIVRLYNVIEILGFYREAFSKIVHDECIILRIIKTLEDFTYQRMKTVLDDELYTISNTNLSITDDLLPPDFVTTFLRNANSIFKIRGASLSVQGVDELPFKMLFMQLFDRILEICAAMTEDVRPPYKGIILMLNVLDSCTNYVGRYTFLNELFEYLQEKTTYYKNNLTTLLNNDYIAQAGLSDLLQKIADTTDDKQALKNYLHSWKWDQQIDKFSTFIRKTLSETIDNLQLLTSPIVTNQVLKETAISFVGAIETVDKALELSNLERRWPLSTEELLIAMNVDSMDTLSDIGQSDIDNLSVN.

This sequence belongs to the COG6 family.

It is found in the cytoplasm. Its subcellular location is the nucleus. The protein localises to the golgi apparatus membrane. Acts as a component of the peripheral membrane COG complex that is involved in intra-Golgi protein trafficking. COG is located at the cis-Golgi, and regulates tethering of retrograde intra-Golgi vesicles and possibly a number of other membrane trafficking events. The polypeptide is Conserved oligomeric Golgi complex subunit 6 (cog6) (Schizosaccharomyces pombe (strain 972 / ATCC 24843) (Fission yeast)).